Consider the following 500-residue polypeptide: Lysine--tRNA ligase (500 aa).

Mg(2+)-binding residues include Glu409 and Glu416.

It belongs to the class-II aminoacyl-tRNA synthetase family. As to quaternary structure, homodimer. Mg(2+) is required as a cofactor.

The protein resides in the cytoplasm. The catalysed reaction is tRNA(Lys) + L-lysine + ATP = L-lysyl-tRNA(Lys) + AMP + diphosphate. The chain is Lysine--tRNA ligase from Lysinibacillus sphaericus (strain C3-41).